The primary structure comprises 1032 residues: Chitin synthase 8 (1032 aa).

Composition is skewed to pro residues over residues 1–11 (MRPGDIYPPPQ) and 26–41 (PPQP…PPQQ). The interval 1–220 (MRPGDIYPPP…DDDMNDSHPL (220 aa)) is disordered. 3 stretches are compositionally biased toward polar residues: residues 65 to 78 (MSPT…SRYN), 98 to 107 (LPTQSLSPFN), and 143 to 160 (TNPS…SYSY). An N-linked (GlcNAc...) asparagine glycan is attached at Asn-78. Residues 176–188 (PHHSSQSSVSSIP) are compositionally biased toward low complexity. 5 N-linked (GlcNAc...) asparagine glycosylation sites follow: Asn-215, Asn-304, Asn-473, Asn-545, and Asn-691. A run of 7 helical transmembrane segments spans residues 728 to 748 (TLNM…FFVL), 762 to 782 (VNIP…LLSL), 796 to 816 (SMVG…FLAV), 842 to 862 (IVIS…MALE), 870 to 890 (FFQY…YAFC), 972 to 992 (VLLV…QASG), and 995 to 1015 (NSLA…LAFF).

The protein belongs to the chitin synthase family.

The protein resides in the cell membrane. It carries out the reaction [(1-&gt;4)-N-acetyl-beta-D-glucosaminyl](n) + UDP-N-acetyl-alpha-D-glucosamine = [(1-&gt;4)-N-acetyl-beta-D-glucosaminyl](n+1) + UDP + H(+). Polymerizes chitin, a structural polymer of the cell wall and septum, by transferring the sugar moiety of UDP-GlcNAc to the non-reducing end of the growing chitin polymer. The polypeptide is Chitin synthase 8 (Cryptococcus neoformans var. grubii serotype A (strain H99 / ATCC 208821 / CBS 10515 / FGSC 9487) (Filobasidiella neoformans var. grubii)).